A 1114-amino-acid chain; its full sequence is MSASTETHHASEAAVPTAPRPRPALGSKSGRLHQVPHIAGLILGVFSVLVFLWSISPVLRYYVHVPREYIDTYYFDAPDTSLSWALVVALLAAALASRKRIAWWLLTIYLVLILITNVIVSITDRNVNAMVAAVVQVVLIGILVAARPEFYTRVRRGAGWKALGVLIVGLAIGTLVGWGLVELFPGTLPQGERFLWALNRVTALAAADNEQFSGRPHGFVNTLLGLFGAMALLAAVITLFRAQRSHNALTGNDESALRGLLLQYGADDSLGYFATRRDKAVVFAPSGKAAITYRVELGVCLASGDPIGDPEAWPHAIEAWQTLASQYGWATAVMGASETGATAYNKAGLTVLQLGDEAILRTREFNLSGRDMRQVRQAVTRVRRQGVTVRIRRHRDVPPEEMAEAIRLADAWRDTETERGFSMALGRLGDRLDGDCLLVEAIAEDGEIDGILSLVPWGPTGVSLDLMRRKPTSPNGVVELMVSELATTSDQFGITKVSLNFAVFRSVFEEGSRIGAGPILRIWRSILVFFSRWWQLEALYRSNVKYQPEWVPRFLCFDDNRELLRVGFASAVAEGFVTLPRFGRSGTHDAIEHTGHHAAVPAALVAAEGLHSDGSAPGEGLAPTATGPKRPEQVRVRLDKLTGLAEQGIDPYPVAYPPSHTVTEAVESPEGTTVRIAGRLLRIRDYGGVVFAVVRDWSGDIQVLVDEARVGTDRIRAFAAEFDLGDLVEVAGVIGYSRRGALSLLANEWRMTGKCLHPLPDKWKGLSDPETRVRQRYVDLAINTDARRLLEARSAVVKSLRDSLGGRGFLEVETPILQQVHGGANAAPFLTHINAYNLDLYLRIAPELYLKRLCVAGMEKVFEIGRVFRNEGVDFKHNPEFTILEAYEAHSDYEKMMVLCRELIQTAAVAAYGREIIMRPGPDGTLVEVDISGEWPVKTMHQAVAEKLGVDVSPETPLAELQRLCDEHEIPYQSTWDAGAVAQEMYEHLVEDYTEFPTFYTNFPTSMSPLTRPHPTIPGVAAKWDLVAWGVELGTAYSELTDPVDQRNRLTEQSMLAAGGDEEAMELDEDFLQALEHAMPPTGGLGMGVDRVVMLITGGSIRETLAFPLAKPRQ.

Basic and acidic residues predominate over residues Met1 to Ser11. The tract at residues Met1–Lys28 is disordered. Positions Met1–Gly618 are phosphatidylglycerol lysyltransferase. The next 6 helical transmembrane spans lie at Ile38 to Val58, Ala77 to Ser97, Ile101 to Ser121, Asn126 to Ala146, Gly164 to Phe184, and Phe219 to Leu239. The tract at residues Glu619–Gln1114 is lysine--tRNA ligase. Positions Val674–Met751 form a DNA-binding region, OB. Positions 1025 and 1032 each coordinate Mg(2+).

It in the N-terminal section; belongs to the LPG synthetase family. In the C-terminal section; belongs to the class-II aminoacyl-tRNA synthetase family. Mg(2+) is required as a cofactor.

It localises to the cell membrane. It catalyses the reaction tRNA(Lys) + L-lysine + ATP = L-lysyl-tRNA(Lys) + AMP + diphosphate. The catalysed reaction is L-lysyl-tRNA(Lys) + a 1,2-diacyl-sn-glycero-3-phospho-(1'-sn-glycerol) = a 1,2-diacyl-sn-glycero-3-phospho-1'-(3'-O-L-lysyl)-sn-glycerol + tRNA(Lys). Its function is as follows. Catalyzes the production of L-lysyl-tRNA(Lys)transfer and the transfer of a lysyl group from L-lysyl-tRNA(Lys) to membrane-bound phosphatidylglycerol (PG), which produces lysylphosphatidylglycerol (LPG), one of the components of the bacterial membrane with a positive net charge. LPG synthesis contributes to the resistance to cationic antimicrobial peptides (CAMPs) and likely protects M.tuberculosis against the CAMPs produced by competiting microorganisms (bacteriocins). In fact, the modification of anionic phosphatidylglycerol with positively charged L-lysine results in repulsion of the peptides. This chain is Lysylphosphatidylglycerol biosynthesis bifunctional protein LysX (lysX), found in Rhodococcus opacus (strain B4).